The following is a 670-amino-acid chain: DNA ligase (670 aa).

Residues 33–37, 82–83, and Glu-114 contribute to the NAD(+) site; these read DAEYD and SL. The active-site N6-AMP-lysine intermediate is the Lys-116. The NAD(+) site is built by Arg-137, Glu-174, Lys-291, and Lys-315. Zn(2+)-binding residues include Cys-409, Cys-412, Cys-427, and Cys-433. The 78-residue stretch at 593–670 folds into the BRCT domain; it reads GAELPLEGKT…TEQDLLELIN (78 aa).

The protein belongs to the NAD-dependent DNA ligase family. LigA subfamily. Mg(2+) serves as cofactor. The cofactor is Mn(2+).

It carries out the reaction NAD(+) + (deoxyribonucleotide)n-3'-hydroxyl + 5'-phospho-(deoxyribonucleotide)m = (deoxyribonucleotide)n+m + AMP + beta-nicotinamide D-nucleotide.. DNA ligase that catalyzes the formation of phosphodiester linkages between 5'-phosphoryl and 3'-hydroxyl groups in double-stranded DNA using NAD as a coenzyme and as the energy source for the reaction. It is essential for DNA replication and repair of damaged DNA. The polypeptide is DNA ligase (Vibrio parahaemolyticus serotype O3:K6 (strain RIMD 2210633)).